A 189-amino-acid chain; its full sequence is Prostaglandin-H2 D-isomerase (189 aa).

The signal sequence occupies residues Met1–Ala24. Residue Gln25 is modified to Pyrrolidone carboxylic acid. Residue Asn51 is glycosylated (N-linked (GlcNAc...) asparagine). The Nucleophile role is filled by Cys65. Asn78 is a glycosylation site (N-linked (GlcNAc...) asparagine). Residues Cys89 and Cys186 are joined by a disulfide bond.

It belongs to the calycin superfamily. Lipocalin family. Monomer. In terms of tissue distribution, abundant in the brain and CNS, where it is expressed in tissues of the blood-brain barrier and secreted into the cerebro-spinal fluid. In the male reproductive system, it is expressed in the testis, efferent ducts and epididymis, and is secreted into the seminal fluid. In the eye, it is expressed in the pigmented epithelium of the retina and the nonpigmented epithelium of the ciliary body, and secreted into the aqueous humor. Low levels detected in various tissue fluids such as serum, normal urine, ascitic fluid and tear fluid. Also found in a number of other organs including the ear, heart and lung.

It localises to the rough endoplasmic reticulum. Its subcellular location is the nucleus membrane. The protein localises to the golgi apparatus. The protein resides in the cytoplasm. It is found in the perinuclear region. It localises to the secreted. It catalyses the reaction prostaglandin H2 = prostaglandin D2. Its function is as follows. Catalyzes the conversion of PGH2 to PGD2, a prostaglandin involved in smooth muscle contraction/relaxation and a potent inhibitor of platelet aggregation. Involved in a variety of CNS functions, such as sedation, NREM sleep and PGE2-induced allodynia, and may have an anti-apoptotic role in oligodendrocytes. Binds small non-substrate lipophilic molecules, including biliverdin, bilirubin, retinal, retinoic acid and thyroid hormone, and may act as a scavenger for harmful hydrophobic molecules and as a secretory retinoid and thyroid hormone transporter. Possibly involved in development and maintenance of the blood-brain, blood-retina, blood-aqueous humor and blood-testis barrier. It is likely to play important roles in both maturation and maintenance of the central nervous system and male reproductive system. Involved in PLA2G3-dependent maturation of mast cells. PLA2G3 is secreted by immature mast cells and acts on nearby fibroblasts upstream to PTDGS to synthesize PGD2, which in turn promotes mast cell maturation and degranulation via PTGDR. This chain is Prostaglandin-H2 D-isomerase (Ptgds), found in Mus musculus (Mouse).